The following is a 673-amino-acid chain: UvrABC system protein B (673 aa).

Residues 24–182 form the Helicase ATP-binding domain; that stretch reads EGVERNDPAQ…YSFVEILYNR (159 aa). ATP is bound at residue 37–44; sequence GVTGSGKT. A Beta-hairpin motif is present at residues 90-113; it reads YYDYYQPEAFMPTSGLYIEKDLAI. Residues 429 to 591 enclose the Helicase C-terminal domain; that stretch reads QIDDLLDEIQ…ITPITVNKSK (163 aa). One can recognise a UVR domain in the interval 634-669; that stretch reads TKMIDRAKKDMDKAAKDLDFVEAARYRDEMFALQKI.

This sequence belongs to the UvrB family. Forms a heterotetramer with UvrA during the search for lesions. Interacts with UvrC in an incision complex.

It localises to the cytoplasm. Its function is as follows. The UvrABC repair system catalyzes the recognition and processing of DNA lesions. A damage recognition complex composed of 2 UvrA and 2 UvrB subunits scans DNA for abnormalities. Upon binding of the UvrA(2)B(2) complex to a putative damaged site, the DNA wraps around one UvrB monomer. DNA wrap is dependent on ATP binding by UvrB and probably causes local melting of the DNA helix, facilitating insertion of UvrB beta-hairpin between the DNA strands. Then UvrB probes one DNA strand for the presence of a lesion. If a lesion is found the UvrA subunits dissociate and the UvrB-DNA preincision complex is formed. This complex is subsequently bound by UvrC and the second UvrB is released. If no lesion is found, the DNA wraps around the other UvrB subunit that will check the other stand for damage. The sequence is that of UvrABC system protein B from Cytophaga hutchinsonii (strain ATCC 33406 / DSM 1761 / CIP 103989 / NBRC 15051 / NCIMB 9469 / D465).